The primary structure comprises 305 residues: Endonuclease III-like protein 1 (305 aa).

A mitochondrion-targeting transit peptide spans 1-28 (MNAAGVRMVVTRARSRGTGASLRRRGEK). The interval 1–83 (MNAAGVRMVV…HLQAPSWQPQ (83 aa)) is disordered. Position 64 is a phosphoserine (serine 64). Residues 192–216 (RYDGDIPASVAELVALPGVGPKMAH) enclose the HhH domain. The active-site Nucleophile; for N-glycosylase activity is the lysine 213. Positions 283, 290, 293, and 299 each coordinate [4Fe-4S] cluster.

Belongs to the Nth/MutY family. In terms of assembly, interacts with YBX1. Interacts with ERCC5/XPG; the interaction stimulates NTHL1 activity and NTHL1 binding to its DNA substrate. [4Fe-4S] cluster is required as a cofactor.

The protein localises to the nucleus. The protein resides in the mitochondrion. The enzyme catalyses 2'-deoxyribonucleotide-(2'-deoxyribose 5'-phosphate)-2'-deoxyribonucleotide-DNA = a 3'-end 2'-deoxyribonucleotide-(2,3-dehydro-2,3-deoxyribose 5'-phosphate)-DNA + a 5'-end 5'-phospho-2'-deoxyribonucleoside-DNA + H(+). In terms of biological role, bifunctional DNA N-glycosylase with associated apurinic/apyrimidinic (AP) lyase function that catalyzes the first step in base excision repair (BER), the primary repair pathway for the repair of oxidative DNA damage. The DNA N-glycosylase activity releases the damaged DNA base from DNA by cleaving the N-glycosidic bond, leaving an AP site. The AP lyase activity cleaves the phosphodiester bond 3' to the AP site by a beta-elimination. Primarily recognizes and repairs oxidative base damage of pyrimidines. The polypeptide is Endonuclease III-like protein 1 (Bos taurus (Bovine)).